A 227-amino-acid chain; its full sequence is NAD(P)H-quinone oxidoreductase subunit K, chloroplastic (227 aa).

Residues cysteine 43, cysteine 44, cysteine 108, and cysteine 139 each coordinate [4Fe-4S] cluster.

The protein belongs to the complex I 20 kDa subunit family. NDH is composed of at least 16 different subunits, 5 of which are encoded in the nucleus. It depends on [4Fe-4S] cluster as a cofactor.

Its subcellular location is the plastid. It is found in the chloroplast thylakoid membrane. It carries out the reaction a plastoquinone + NADH + (n+1) H(+)(in) = a plastoquinol + NAD(+) + n H(+)(out). The enzyme catalyses a plastoquinone + NADPH + (n+1) H(+)(in) = a plastoquinol + NADP(+) + n H(+)(out). Its function is as follows. NDH shuttles electrons from NAD(P)H:plastoquinone, via FMN and iron-sulfur (Fe-S) centers, to quinones in the photosynthetic chain and possibly in a chloroplast respiratory chain. The immediate electron acceptor for the enzyme in this species is believed to be plastoquinone. Couples the redox reaction to proton translocation, and thus conserves the redox energy in a proton gradient. This is NAD(P)H-quinone oxidoreductase subunit K, chloroplastic from Citrus sinensis (Sweet orange).